A 432-amino-acid polypeptide reads, in one-letter code: Putative D-alanyl-D-alanine carboxypeptidase (432 aa).

The chain crosses the membrane as a helical; Signal-anchor span at residues 7–25 (ATVLLTFSLSAFAVEYPVL).

It belongs to the peptidase S12 family. YfeW subfamily.

The protein localises to the cell inner membrane. The enzyme catalyses Preferential cleavage: (Ac)2-L-Lys-D-Ala-|-D-Ala. Also transpeptidation of peptidyl-alanyl moieties that are N-acyl substituents of D-alanine.. The sequence is that of Putative D-alanyl-D-alanine carboxypeptidase from Salmonella heidelberg (strain SL476).